Here is a 491-residue protein sequence, read N- to C-terminus: Glutamyl-tRNA(Gln) amidotransferase subunit A (491 aa).

Catalysis depends on charge relay system residues K80 and S155. S179 acts as the Acyl-ester intermediate in catalysis.

It belongs to the amidase family. GatA subfamily. Heterotrimer of A, B and C subunits.

It catalyses the reaction L-glutamyl-tRNA(Gln) + L-glutamine + ATP + H2O = L-glutaminyl-tRNA(Gln) + L-glutamate + ADP + phosphate + H(+). Its function is as follows. Allows the formation of correctly charged Gln-tRNA(Gln) through the transamidation of misacylated Glu-tRNA(Gln) in organisms which lack glutaminyl-tRNA synthetase. The reaction takes place in the presence of glutamine and ATP through an activated gamma-phospho-Glu-tRNA(Gln). The chain is Glutamyl-tRNA(Gln) amidotransferase subunit A from Salinispora tropica (strain ATCC BAA-916 / DSM 44818 / JCM 13857 / NBRC 105044 / CNB-440).